The following is a 266-amino-acid chain: Phosphate import ATP-binding protein PstB (266 aa).

The 247-residue stretch at 15-261 (VQKSVVNKLN…PKNKQTEDYI (247 aa)) folds into the ABC transporter domain. 50–57 (GPSGCGKS) contacts ATP.

The protein belongs to the ABC transporter superfamily. Phosphate importer (TC 3.A.1.7) family. The complex is composed of two ATP-binding proteins (PstB), two transmembrane proteins (PstC and PstA) and a solute-binding protein (PstS).

The protein localises to the cell inner membrane. The catalysed reaction is phosphate(out) + ATP + H2O = ADP + 2 phosphate(in) + H(+). In terms of biological role, part of the ABC transporter complex PstSACB involved in phosphate import. Responsible for energy coupling to the transport system. The sequence is that of Phosphate import ATP-binding protein PstB from Nitrosomonas europaea (strain ATCC 19718 / CIP 103999 / KCTC 2705 / NBRC 14298).